The chain runs to 427 residues: tRNA(Ile)-lysidine synthase (427 aa).

Position 29–34 (29–34) interacts with ATP; sequence SGGVDS.

Belongs to the tRNA(Ile)-lysidine synthase family.

It localises to the cytoplasm. It carries out the reaction cytidine(34) in tRNA(Ile2) + L-lysine + ATP = lysidine(34) in tRNA(Ile2) + AMP + diphosphate + H(+). Functionally, ligates lysine onto the cytidine present at position 34 of the AUA codon-specific tRNA(Ile) that contains the anticodon CAU, in an ATP-dependent manner. Cytidine is converted to lysidine, thus changing the amino acid specificity of the tRNA from methionine to isoleucine. This Thermosipho africanus (strain TCF52B) protein is tRNA(Ile)-lysidine synthase.